A 217-amino-acid polypeptide reads, in one-letter code: Somatotropin (217 aa).

The N-terminal stretch at 1–26 (MAAGSRTSLLLAFALLCLPWLQEGSA) is a signal peptide. Histidine 44 provides a ligand contact to Zn(2+). An intrachain disulfide couples cysteine 79 to cysteine 191. Serine 132 bears the Phosphoserine mark. Glutamate 200 contacts Zn(2+). An intrachain disulfide couples cysteine 208 to cysteine 215.

The protein belongs to the somatotropin/prolactin family.

Its subcellular location is the secreted. Its function is as follows. Plays an important role in growth control. Its major role in stimulating body growth is to stimulate the liver and other tissues to secrete IGF1. It stimulates both the differentiation and proliferation of myoblasts. It also stimulates amino acid uptake and protein synthesis in muscle and other tissues. The chain is Somatotropin (GH1) from Macaca mulatta (Rhesus macaque).